Reading from the N-terminus, the 553-residue chain is Phospholipase B (553 aa).

The signal sequence occupies residues M1–R35. N313, N416, and N531 each carry an N-linked (GlcNAc...) asparagine glycan.

It belongs to the phospholipase B-like family. In terms of tissue distribution, expressed by the venom gland.

It is found in the secreted. May cause hemolysis or may be involved in protein folding and translation. This Crotalus adamanteus (Eastern diamondback rattlesnake) protein is Phospholipase B.